A 298-amino-acid polypeptide reads, in one-letter code: N-acetylmuramic acid 6-phosphate etherase (298 aa).

Positions 55 to 218 (IHAQVSGGGR…STGLMIKSGK (164 aa)) constitute an SIS domain. Glutamate 83 acts as the Proton donor in catalysis. Residue glutamate 114 is part of the active site.

This sequence belongs to the GCKR-like family. MurNAc-6-P etherase subfamily. Homodimer.

It carries out the reaction N-acetyl-D-muramate 6-phosphate + H2O = N-acetyl-D-glucosamine 6-phosphate + (R)-lactate. It functions in the pathway amino-sugar metabolism; 1,6-anhydro-N-acetylmuramate degradation. Its pathway is amino-sugar metabolism; N-acetylmuramate degradation. The protein operates within cell wall biogenesis; peptidoglycan recycling. Its function is as follows. Specifically catalyzes the cleavage of the D-lactyl ether substituent of MurNAc 6-phosphate, producing GlcNAc 6-phosphate and D-lactate. Together with AnmK, is also required for the utilization of anhydro-N-acetylmuramic acid (anhMurNAc) either imported from the medium or derived from its own cell wall murein, and thus plays a role in cell wall recycling. In Shigella flexneri, this protein is N-acetylmuramic acid 6-phosphate etherase.